The following is a 383-amino-acid chain: Vesicle-associated membrane protein-associated protein scs2 (383 aa).

An MSP domain is found at 1-123; that stretch reads MSVECSGELF…SIFDRKIRCV (123 aa). Over 1 to 362 the chain is Cytoplasmic; that stretch reads MSVECSGELF…TGASLTESPG (362 aa). The segment covering 127-146 has biased composition (polar residues); the sequence is KQPPQSADKQVENTSTSNPP. 2 disordered regions span residues 127 to 160 and 233 to 359; these read KQPP…SSVG and ESAS…SLTE. Phosphoserine is present on residues S236, S237, S259, S261, and S268. A compositionally biased stretch (basic and acidic residues) spans 241 to 263; sequence DVARSKVQDIIDNEIPKPSESPR. Residues 289–300 are compositionally biased toward basic and acidic residues; it reads FDTKKNDFDSKL. Residues 347–359 show a composition bias toward polar residues; it reads ADPSSSTGASLTE. Residues 363 to 383 traverse the membrane as a helical; Anchor for type IV membrane protein segment; it reads IPPNIVIILCLIFFLIGYLFF.

Belongs to the VAMP-associated protein (VAP) (TC 9.B.17) family. In terms of assembly, interacts (via MSP domain) with duc1 (via FFAT-motif); the interaction is direct and serves to restrict the localization of duc1 to areas of cell membrane-endoplasmic reticulum contact sites, and away from the cell division site. Interacts with epr1.

It is found in the endoplasmic reticulum membrane. In terms of biological role, vesicle-associated membrane protein-associated protein (VAP) implicated in maintaining the cortical endoplasmic reticulum (ER)-plasma membrane (PM) attachment. ER-PM contacts function to modulate the distribution of contractile ring components to ensure robust ring assembly. ER-PM contacts function also in controlling exocytosis and maintenance of cell polarity regulating cell shape. VAPs play an important role in regulating eisosome assembly. VAPs also contribute to ER-phagy by tethering atg8 to the ER membrane, but also by maintaining the ER-plasma membrane contact. Restricts the localization of duc1 away from the site of cell division. This chain is Vesicle-associated membrane protein-associated protein scs2 (scs2), found in Schizosaccharomyces pombe (strain 972 / ATCC 24843) (Fission yeast).